Here is a 611-residue protein sequence, read N- to C-terminus: Major facilitator superfamily domain-containing protein YCR023C (611 aa).

At 1 to 89 (MARQKLTFKE…GRFSEKHGRK (89 aa)) the chain is on the extracellular side. Residues 90 to 110 (ITLTCGLIGTSVSLLILGFSR) traverse the membrane as a helical segment. Residues 111–152 (NFYQALVARSLMGLLNGNVGVIRTIIGEIATERKHQALAFST) are Cytoplasmic-facing. The helical transmembrane segment at 153-173 (MPLLFQFGAVVGPMIGGFLVF) threads the bilayer. Residues 174–199 (RDGTMNEVPLWFPHFAKRIIRSYPYA) lie on the Extracellular side of the membrane. Residues 200-220 (LPNVVVCMFLMFGLTNATLFL) form a helical membrane-spanning segment. Over 221-353 (EETHPAFKDR…SIFHHVFHTK (133 aa)) the chain is Cytoplasmic. Residues 261–271 (DDSENIHHRNE) are compositionally biased toward basic and acidic residues. The tract at residues 261–301 (DDSENIHHRNENVNSIRGQDSEEDENSPLVNTTNDDDTESI) is disordered. The residue at position 313 (Ser313) is a Phosphoserine. The helical transmembrane segment at 354-372 (VFYPISVNFIMALHLIVYN) threads the bilayer. At 373 to 413 (EFLPVFLAYDLAVDPENPKKLASKFPWKISGGIGYEPEQTG) the chain is on the extracellular side. Residues 414–434 (TLLSTTGIFGCFVVIFIFPIV) traverse the membrane as a helical segment. Residues 435-442 (DRNFDCLT) lie on the Cytoplasmic side of the membrane. A helical membrane pass occupies residues 443–463 (IFRTLVKLYPIMYVMVPYVVF). The Extracellular portion of the chain corresponds to 464-542 (LQNERIPSWY…YIMSWSQQND (79 aa)). The chain crosses the membrane as a helical span at residues 543–563 (VAWVSWWSLSLFCMVALYQSY). The Cytoplasmic portion of the chain corresponds to 564 to 611 (KIAPIDDNENELHGQGSEDAYNSQSQSSDLRMAHRSSLSSLSNQRCTT). Ser603 carries the post-translational modification Phosphoserine.

This sequence belongs to the major facilitator superfamily.

The protein localises to the membrane. It catalyses the reaction chloride(in) = chloride(out). Functionally, outward-rectifying chloride channel involved in chloride homeostasis. The protein is Major facilitator superfamily domain-containing protein YCR023C of Saccharomyces cerevisiae (strain ATCC 204508 / S288c) (Baker's yeast).